We begin with the raw amino-acid sequence, 102 residues long: Large ribosomal subunit protein uL24 (102 aa).

The protein belongs to the universal ribosomal protein uL24 family. As to quaternary structure, part of the 50S ribosomal subunit.

One of two assembly initiator proteins, it binds directly to the 5'-end of the 23S rRNA, where it nucleates assembly of the 50S subunit. Functionally, one of the proteins that surrounds the polypeptide exit tunnel on the outside of the subunit. The chain is Large ribosomal subunit protein uL24 from Rhizobium johnstonii (strain DSM 114642 / LMG 32736 / 3841) (Rhizobium leguminosarum bv. viciae).